Consider the following 500-residue polypeptide: Low-density lipoprotein receptor-related protein 11 (500 aa).

The signal sequence occupies residues 1–37 (MASVAQESAGSQRRLPPRHGALRGLLLLCLWLPSGRA). Topologically, residues 38–450 (ALPPAAPLSE…GGEHPAPETG (413 aa)) are extracellular. The 86-residue stretch at 99–184 (AMPDAIIRTK…FALHSGYSSY (86 aa)) folds into the MANSC domain. N-linked (GlcNAc...) asparagine glycosylation is found at Asn-164 and Asn-291. The PKD domain occupies 210–305 (PLSKAGQDVV…VLRAAYSTGG (96 aa)). Residues 309-345 (TCSRYHFFCDDGCCIDITLACDGVQQCPDGSDEDFCQ) enclose the LDL-receptor class A domain. Disulfide bonds link Cys-310–Cys-322, Cys-317–Cys-335, and Cys-329–Cys-344. Positions 358–445 (AASPALPRTT…KGDGGGGEHP (88 aa)) are disordered. Asn-401 is a glycosylation site (N-linked (GlcNAc...) asparagine). A helical transmembrane segment spans residues 451–473 (AVLPLALGLAITALLLLMVACRL). Residues 474 to 500 (RLVKQKLKKARPITSEESDYLINGMYL) are Cytoplasmic-facing. Phosphoserine is present on Ser-491.

Belongs to the LDLR family.

It localises to the membrane. The sequence is that of Low-density lipoprotein receptor-related protein 11 (LRP11) from Homo sapiens (Human).